The chain runs to 371 residues: Glutamate 5-kinase (371 aa).

Residue K14 coordinates ATP. Substrate is bound by residues S54, D141, and N153. Residue 173 to 174 (TD) coordinates ATP. The region spanning 280–357 (AGDLILDDGA…TQIEKLLGYI (78 aa)) is the PUA domain.

It belongs to the glutamate 5-kinase family.

The protein resides in the cytoplasm. The enzyme catalyses L-glutamate + ATP = L-glutamyl 5-phosphate + ADP. It participates in amino-acid biosynthesis; L-proline biosynthesis; L-glutamate 5-semialdehyde from L-glutamate: step 1/2. Its function is as follows. Catalyzes the transfer of a phosphate group to glutamate to form L-glutamate 5-phosphate. This Aromatoleum aromaticum (strain DSM 19018 / LMG 30748 / EbN1) (Azoarcus sp. (strain EbN1)) protein is Glutamate 5-kinase.